The sequence spans 202 residues: HTH-type transcriptional regulator BetI (202 aa).

The HTH tetR-type domain occupies 8-68 (PIRRRQLIDA…ATMRDITRQL (61 aa)). Residues 31–50 (TIAQIARRAGVSAGIISHYF) constitute a DNA-binding region (H-T-H motif).

Its pathway is amine and polyamine biosynthesis; betaine biosynthesis via choline pathway [regulation]. Functionally, repressor involved in the biosynthesis of the osmoprotectant glycine betaine. It represses transcription of the choline transporter BetT and the genes of BetAB involved in the synthesis of glycine betaine. This chain is HTH-type transcriptional regulator BetI, found in Cronobacter sakazakii (strain ATCC BAA-894) (Enterobacter sakazakii).